Here is a 447-residue protein sequence, read N- to C-terminus: Protein CLT1, chloroplastic (447 aa).

A chloroplast-targeting transit peptide spans 1-48; the sequence is MATTSSDRLIAGLTASIGSIESRYANPAQSVSLICRNQINGAPPIVLR. Helical transmembrane passes span 103–123, 135–155, 172–192, 200–220, 228–248, 256–276, 304–324, 351–371, 387–407, and 413–433; these read MEIV…RVLY, FFLA…ILYF, LPFL…MAAA, TTVL…IFLG, ILGC…GSGA, GILW…DTVM, IFQV…WGIP, GAPL…ISLL, TVSV…LGVA, and GFVA…WTPS.

The protein belongs to the CRT-like transporter family.

Its subcellular location is the plastid. It localises to the chloroplast membrane. Involved in thiol transport from the plastid to the cytosol. Transports probably both glutathione (GSH) and its precursor, gamma-glutamylcysteine (gamma-EC). Exhibits some functional redundancy with CLT3 in maintaining the root GSH pool. In Arabidopsis thaliana (Mouse-ear cress), this protein is Protein CLT1, chloroplastic.